A 376-amino-acid chain; its full sequence is C-type lectin domain family 4 member M (376 aa).

Topologically, residues 1–49 are cytoplasmic; the sequence is MSDSKEPRVQQLGLLEEDPTTSGIRLFPRDFQFQQIHGHKSSTGCLGHG. Residues 14–15 carry the Endocytosis signal motif; sequence LL. The chain crosses the membrane as a helical; Signal-anchor for type II membrane protein span at residues 50–70; sequence ALVLQLLSFTLLAGVLVAILV. At 71–376 the chain is on the extracellular side; sequence QVSKVPSSLS…KKPTVCFRDE (306 aa). N-linked (GlcNAc...) asparagine glycosylation is present at Asn-92. Repeat copies occupy residues 108–130, 131–153, 154–176, 177–199, 200–222, and 223–245. Residues 108–246 form a 6 X approximate tandem repeats region; it reads KLQEIYQELT…AFERLCRHCP (139 aa). 4 disulfides stabilise this stretch: Cys-242/Cys-372, Cys-245/Cys-256, Cys-273/Cys-366, and Cys-345/Cys-358. In terms of domain architecture, C-type lectin spans 251–367; it reads FFQGNCYFMS…CDVDNYWICK (117 aa). Glu-336, Asn-338, Ser-340, Glu-343, Asn-354, and Asp-355 together coordinate Ca(2+). N-linked (GlcNAc...) asparagine glycosylation occurs at Asn-338.

In terms of assembly, homotetramer.

Its subcellular location is the membrane. Its function is as follows. Probable pathogen-recognition receptor involved in peripheral immune surveillance in liver. May mediate the endocytosis of pathogens which are subsequently degraded in lysosomal compartments. Probably recognizes in a calcium-dependent manner high mannose N-linked oligosaccharides in a variety of pathogen antigens. Is a receptor for ICAM3, probably by binding to mannose-like carbohydrates. The sequence is that of C-type lectin domain family 4 member M (CLEC4M) from Gorilla gorilla gorilla (Western lowland gorilla).